We begin with the raw amino-acid sequence, 171 residues long: Large ribosomal subunit protein uL10 (171 aa).

The protein belongs to the universal ribosomal protein uL10 family. Part of the ribosomal stalk of the 50S ribosomal subunit. The N-terminus interacts with L11 and the large rRNA to form the base of the stalk. The C-terminus forms an elongated spine to which L12 dimers bind in a sequential fashion forming a multimeric L10(L12)X complex.

Functionally, forms part of the ribosomal stalk, playing a central role in the interaction of the ribosome with GTP-bound translation factors. The protein is Large ribosomal subunit protein uL10 of Corynebacterium diphtheriae (strain ATCC 700971 / NCTC 13129 / Biotype gravis).